The primary structure comprises 145 residues: MDIHQILKLLPHRYPFLLVDRVNELERGKRILAIKNVTINEPFFTGHFPARPVMPGVLILEALAQAAGLLSFDMMGEAPGDDKVFYFVGIDGARFKRPVEPGDQLILDVELDRIKGGIYKFKGVARVGDSVACEAEIMCTMRTVA.

The active site involves His-47.

The protein belongs to the thioester dehydratase family. FabZ subfamily.

It localises to the cytoplasm. It catalyses the reaction a (3R)-hydroxyacyl-[ACP] = a (2E)-enoyl-[ACP] + H2O. In terms of biological role, involved in unsaturated fatty acids biosynthesis. Catalyzes the dehydration of short chain beta-hydroxyacyl-ACPs and long chain saturated and unsaturated beta-hydroxyacyl-ACPs. The sequence is that of 3-hydroxyacyl-[acyl-carrier-protein] dehydratase FabZ from Acidovorax sp. (strain JS42).